The following is a 306-amino-acid chain: Ribosomal protein L11 methyltransferase (306 aa).

Thr154, Gly179, Asp201, and Asn242 together coordinate S-adenosyl-L-methionine.

It belongs to the methyltransferase superfamily. PrmA family.

The protein localises to the cytoplasm. The catalysed reaction is L-lysyl-[protein] + 3 S-adenosyl-L-methionine = N(6),N(6),N(6)-trimethyl-L-lysyl-[protein] + 3 S-adenosyl-L-homocysteine + 3 H(+). Its function is as follows. Methylates ribosomal protein L11. In Xylella fastidiosa (strain 9a5c), this protein is Ribosomal protein L11 methyltransferase.